The primary structure comprises 421 residues: Threonine--tRNA ligase editing subunit (421 aa).

The protein belongs to the class-II aminoacyl-tRNA synthetase family. Archaea-specific ThrRS editing domain subfamily. Probably interacts with its catalytic subunit.

The protein localises to the cytoplasm. Freestanding tRNA editing subunit of threonine--tRNA ligase, the catalytic subunit is probably AC Q9YDW0. Deacylates (edits) mischarged L-seryl-tRNA(Thr) in trans; has no activity on correctly charged L-threonyl-tRNA(Thr). Probably does not aminoacylate tRNA(Thr). Deacylates correctly charged glycyl-tRNA(Gly), but not glycyl-tRNA(Gly)(2'-dA76) (the terminal 2'-OH of tRNA adenine 76 has been dehydroxylated) nor the 2'-fluoro tRNA derivative, strongly suggesting the editing function is catalyzed by the 2'-OH of A76 of tRNA(Thr). The sequence is that of Threonine--tRNA ligase editing subunit (thrS2) from Aeropyrum pernix (strain ATCC 700893 / DSM 11879 / JCM 9820 / NBRC 100138 / K1).